Here is a 170-residue protein sequence, read N- to C-terminus: MHIHRTRIVITSSRDPSIRTRNFLNVLTFVLPDSVKITRGKKSKIEIFERAINLGALYLLFVLAKNGNPLRIIVYDLESLSIKYFFKLSGLSLPSDYNVSLNQIKGHSNVCIKLNECDFLRDFLVDMNMYNLTNNCDVVVNSRLIHTNICELLFMLTTKNIKFLKMILEA.

The Brix domain maps to 6-170 (TRIVITSSRD…IKFLKMILEA (165 aa)).

Probably involved in the biogenesis of the ribosome. The polypeptide is Probable Brix domain-containing ribosomal biogenesis protein (Saccharolobus solfataricus (strain ATCC 35092 / DSM 1617 / JCM 11322 / P2) (Sulfolobus solfataricus)).